Here is a 432-residue protein sequence, read N- to C-terminus: Probable protein phosphatase 2C 75 (432 aa).

In terms of domain architecture, PPM-type phosphatase spans 44-356; it reads VACLFTRQGK…DDCAVVCLFL (313 aa). The Mn(2+) site is built by Asp80, Gly81, Asp301, and Asp347. The tract at residues 372–408 is disordered; that stretch reads SPRMPALSGITRPNSKRVTPDDVDDGSDSNVSGDERS.

Belongs to the PP2C family. The cofactor is Mg(2+). Mn(2+) serves as cofactor.

It catalyses the reaction O-phospho-L-seryl-[protein] + H2O = L-seryl-[protein] + phosphate. The enzyme catalyses O-phospho-L-threonyl-[protein] + H2O = L-threonyl-[protein] + phosphate. This chain is Probable protein phosphatase 2C 75, found in Oryza sativa subsp. japonica (Rice).